Here is a 234-residue protein sequence, read N- to C-terminus: DNA repair and recombination protein RadB (234 aa).

It belongs to the eukaryotic RecA-like protein family. RadB subfamily.

In terms of biological role, involved in DNA repair and in homologous recombination. May regulate the cleavage reactions of the branch-structured DNA. Has a very weak ATPase activity that is not stimulated by DNA. Binds DNA but does not promote DNA strands exchange. This chain is DNA repair and recombination protein RadB, found in Methanobrevibacter smithii (strain ATCC 35061 / DSM 861 / OCM 144 / PS).